We begin with the raw amino-acid sequence, 257 residues long: NAD-capped RNA hydrolase NudC (257 aa).

Substrate contacts are provided by lysine 25 and arginine 69. Residues cysteine 98 and cysteine 101 each contribute to the Zn(2+) site. Glutamate 111 provides a ligand contact to substrate. The Zn(2+) site is built by cysteine 116 and cysteine 119. Tyrosine 124 provides a ligand contact to substrate. The Nudix hydrolase domain maps to 125–248 (PQIAPCIIVA…TVARRLIEDT (124 aa)). A divalent metal cation-binding residues include alanine 158, glutamate 174, and glutamate 178. Positions 159 to 180 (GFVEVGETLEQAVAREVMEESG) match the Nudix box motif. 192-199 (QPWPFPQS) contacts substrate. Glutamate 219 contributes to the a divalent metal cation binding site. Alanine 241 provides a ligand contact to substrate.

The protein belongs to the Nudix hydrolase family. NudC subfamily. Homodimer. Mg(2+) is required as a cofactor. Requires Mn(2+) as cofactor. The cofactor is Zn(2+).

It catalyses the reaction a 5'-end NAD(+)-phospho-ribonucleoside in mRNA + H2O = a 5'-end phospho-adenosine-phospho-ribonucleoside in mRNA + beta-nicotinamide D-ribonucleotide + 2 H(+). The catalysed reaction is NAD(+) + H2O = beta-nicotinamide D-ribonucleotide + AMP + 2 H(+). The enzyme catalyses NADH + H2O = reduced beta-nicotinamide D-ribonucleotide + AMP + 2 H(+). MRNA decapping enzyme that specifically removes the nicotinamide adenine dinucleotide (NAD) cap from a subset of mRNAs by hydrolyzing the diphosphate linkage to produce nicotinamide mononucleotide (NMN) and 5' monophosphate mRNA. The NAD-cap is present at the 5'-end of some mRNAs and stabilizes RNA against 5'-processing. Has preference for mRNAs with a 5'-end purine. Catalyzes the hydrolysis of a broad range of dinucleotide pyrophosphates. The chain is NAD-capped RNA hydrolase NudC from Shigella boydii serotype 18 (strain CDC 3083-94 / BS512).